Consider the following 1086-residue polypeptide: Auxin response factor 19 (1086 aa).

A DNA-binding region (TF-B3) is located at residues 126-228 (FCKTLTASDT…QLMLGIRRAN (103 aa)). Positions 454–485 (PSKLLNFQSPNLSSANSQFNKPNTVNHISQQM) are enriched in polar residues. Disordered stretches follow at residues 454 to 504 (PSKL…QQQQ), 545 to 564 (QSPNQPTGFSQSQLQQQSML), 624 to 647 (LSQNPQQLQMQQQSSKPSPSQQLQ), and 659 to 788 (QQQS…SVFE). The segment covering 486 to 504 (QAQPAMVKSQQQQQQQQQQ) has biased composition (low complexity). Residues 659–697 (QQQSIPPVSSSLQPQLSALQQTQSHQLQQLLSSQNQQPL) are compositionally biased toward low complexity. The segment covering 700 to 710 (GNNSFPASTFM) has biased composition (polar residues). The segment covering 711-724 (QPPQIQVSPQQQGQ) has biased composition (low complexity). A compositionally biased stretch (polar residues) spans 747 to 771 (SCSTSPSANNTGHDNVSPTNFLSRN). The span at 772 to 785 (QQQGQAASVSASDS) shows a compositional bias: low complexity. Residues 958–1051 (RTYTKVQKRG…EVQQMSLDGD (94 aa)) enclose the PB1 domain.

It belongs to the ARF family. Homodimers and heterodimers. Interacts with the auxin-responsive protein IAA1. Binds to JMJ30. Binds to ATXR2 in the nucleus.

The protein localises to the nucleus. Auxin response factors (ARFs) are transcriptional factors that bind specifically to the DNA sequence 5'-TGTCTC-3' found in the auxin-responsive promoter elements (AuxREs). Could act as transcriptional activator or repressor. Formation of heterodimers with Aux/IAA proteins may alter their ability to modulate early auxin response genes expression. Involved in ethylene responses. Regulates lateral root formation through direct regulation of LBD16 and/or LBD29. Functionally redundant with ARF7. Involved in cellular dedifferentiation during callus formation on callus-inducing medium (CIM) and in an ATXR2-dependent manner. This chain is Auxin response factor 19, found in Arabidopsis thaliana (Mouse-ear cress).